Here is a 471-residue protein sequence, read N- to C-terminus: Putative multidrug resistance protein MdtD (471 aa).

Residues 1–11 (MTDLPDSTRWQ) lie on the Periplasmic side of the membrane. Residues 12 to 32 (LWIVAFGFFMQSLDTTIVNTA) traverse the membrane as a helical segment. The Cytoplasmic portion of the chain corresponds to 33 to 48 (LPSMAQSLGESPLHMH). The chain crosses the membrane as a helical span at residues 49–69 (MVIVSYVLTVAVMLPASGWLA). At 70–76 (DKVGVRN) the chain is on the periplasmic side. The chain crosses the membrane as a helical span at residues 77-97 (IFFTAIVLFTLGSLFCALSGT). Over 98 to 101 (LNEL) the chain is Cytoplasmic. A helical transmembrane segment spans residues 102-124 (LLARALQGVGGAMMVPVGRLTVM). Residues 125 to 137 (KIVPREQYMAAMT) are Periplasmic-facing. Residues 138 to 158 (FVTLPGQVGPLLGPALGGLLV) form a helical membrane-spanning segment. Over 159 to 164 (EYASWH) the chain is Cytoplasmic. The helical transmembrane segment at 165 to 185 (WIFLINIPVGIIGAIATLMLM) threads the bilayer. At 186 to 196 (PNYTMQTRRFD) the chain is on the periplasmic side. The chain crosses the membrane as a helical span at residues 197 to 217 (LSGFLLLAVGMAVLTLALDGS). Over 218-224 (KGTGLSP) the chain is Cytoplasmic. The helical transmembrane segment at 225-245 (LAIAGLVAVGVVALVLYLLHA) threads the bilayer. Residues 246 to 262 (RNNNRALFSLKLFRTRT) lie on the Periplasmic side of the membrane. The helical transmembrane segment at 263–283 (FSLGLAGSFAGRIGSGMLPFM) threads the bilayer. At 284–285 (TP) the chain is on the cytoplasmic side. The chain crosses the membrane as a helical span at residues 286-306 (VFLQIGLGFSPFHAGLMMIPM). Over 307–341 (VLGSMGMKRIVVQVVNRFGYRRVLVATTLGLSLVT) the chain is Periplasmic. A helical transmembrane segment spans residues 342-362 (LLFMTTALLGWYYVLPFVLFL). At 363–395 (QGMVNSTRFSSMNTLTLKDLPDNLASSGNSLLS) the chain is on the cytoplasmic side. Residues 396–416 (MIMQLSMSIGVTIAGLLLGLF) traverse the membrane as a helical segment. Over 417 to 430 (GSQHVSIDSGTTQT) the chain is Periplasmic. Residues 431 to 451 (VFMYTWLSMALIIALPAFIFA) form a helical membrane-spanning segment. Topologically, residues 452–471 (RVPNDTHQNVAISRRKRSAQ) are cytoplasmic.

It belongs to the major facilitator superfamily. TCR/Tet family.

Its subcellular location is the cell inner membrane. The chain is Putative multidrug resistance protein MdtD from Escherichia coli (strain 55989 / EAEC).